Consider the following 255-residue polypeptide: Acetylglutamate kinase (255 aa).

Substrate contacts are provided by residues 40 to 41 (GG), Arg-62, and Asn-153.

The protein belongs to the acetylglutamate kinase family. ArgB subfamily.

Its subcellular location is the cytoplasm. The enzyme catalyses N-acetyl-L-glutamate + ATP = N-acetyl-L-glutamyl 5-phosphate + ADP. It participates in amino-acid biosynthesis; L-arginine biosynthesis; N(2)-acetyl-L-ornithine from L-glutamate: step 2/4. Its function is as follows. Catalyzes the ATP-dependent phosphorylation of N-acetyl-L-glutamate. The sequence is that of Acetylglutamate kinase from Bacillus cereus (strain G9842).